The sequence spans 477 residues: Tyrosine--tRNA ligase, mitochondrial (477 aa).

Residues Met-1–Gly-16 constitute a mitochondrion transit peptide. Tyr-77 provides a ligand contact to L-tyrosine. ATP is bound at residue Asp-81. The 'HIGH' region motif lies at Pro-82 to His-91. Residues Asp-121, Tyr-221, Gln-225, and Asp-228 each coordinate L-tyrosine. Residue Gly-244 to Asp-246 participates in ATP binding. Residue Gln-247 participates in L-tyrosine binding. Residues Ile-274 and Lys-284 each coordinate ATP. The 'KMSKS' region motif lies at Lys-281–Ser-285. N6-acetyllysine is present on residues Lys-355 and Lys-367.

It belongs to the class-I aminoacyl-tRNA synthetase family. In terms of assembly, homodimer.

It is found in the mitochondrion matrix. The catalysed reaction is tRNA(Tyr) + L-tyrosine + ATP = L-tyrosyl-tRNA(Tyr) + AMP + diphosphate + H(+). In terms of biological role, catalyzes the attachment of tyrosine to tRNA(Tyr) in a two-step reaction: tyrosine is first activated by ATP to form Tyr-AMP and then transferred to the acceptor end of tRNA(Tyr). The chain is Tyrosine--tRNA ligase, mitochondrial (YARS2) from Homo sapiens (Human).